Reading from the N-terminus, the 258-residue chain is NAD-capped RNA hydrolase NudC (258 aa).

Residue Arg69 participates in substrate binding. Residues Cys98 and Cys101 each contribute to the Zn(2+) site. Position 111 (Glu111) interacts with substrate. 2 residues coordinate Zn(2+): Cys116 and Cys119. Tyr124 is a binding site for substrate. The region spanning 125–248 (PQIAPCIIVA…TVARRLIEDT (124 aa)) is the Nudix hydrolase domain. Positions 158, 174, and 178 each coordinate a divalent metal cation. The Nudix box motif lies at 159-180 (GFVEVGETLEQTVAREVMEESG). 192 to 199 (QPWPFPMS) contributes to the substrate binding site. Position 219 (Glu219) interacts with a divalent metal cation. A substrate-binding site is contributed by Ala241.

The protein belongs to the Nudix hydrolase family. NudC subfamily. Homodimer. The cofactor is Mg(2+). Mn(2+) is required as a cofactor. Zn(2+) serves as cofactor.

The enzyme catalyses a 5'-end NAD(+)-phospho-ribonucleoside in mRNA + H2O = a 5'-end phospho-adenosine-phospho-ribonucleoside in mRNA + beta-nicotinamide D-ribonucleotide + 2 H(+). It carries out the reaction NAD(+) + H2O = beta-nicotinamide D-ribonucleotide + AMP + 2 H(+). It catalyses the reaction NADH + H2O = reduced beta-nicotinamide D-ribonucleotide + AMP + 2 H(+). Functionally, mRNA decapping enzyme that specifically removes the nicotinamide adenine dinucleotide (NAD) cap from a subset of mRNAs by hydrolyzing the diphosphate linkage to produce nicotinamide mononucleotide (NMN) and 5' monophosphate mRNA. The NAD-cap is present at the 5'-end of some mRNAs and stabilizes RNA against 5'-processing. Has preference for mRNAs with a 5'-end purine. Catalyzes the hydrolysis of a broad range of dinucleotide pyrophosphates. The protein is NAD-capped RNA hydrolase NudC of Enterobacter sp. (strain 638).